Here is a 383-residue protein sequence, read N- to C-terminus: TOM1-like protein 2 (383 aa).

The region spanning 45-178 (ATLETLEEPN…GLHARGEENS (134 aa)) is the VHS domain. Residues 223–310 (LSIKDKKEQI…VLSSYKKPDE (88 aa)) form the GAT domain. The tract at residues 305-383 (YKKPDETEKK…LGLSSDEDEK (79 aa)) is disordered. Basic and acidic residues-rich tracts occupy residues 306–316 (KKPDETEKKAS) and 339–354 (EPVK…KHSE). Residues serine 377 and serine 378 each carry the phosphoserine modification.

It belongs to the TOM1 family. In terms of tissue distribution, ubiquitously expressed.

It localises to the cytoplasm. Its subcellular location is the membrane. In terms of biological role, binds ubiquitin in vitro. Might contribute to the loading of the ESCRT machinery. This Arabidopsis thaliana (Mouse-ear cress) protein is TOM1-like protein 2.